A 260-amino-acid chain; its full sequence is NH(3)-dependent NAD(+) synthetase (260 aa).

31 to 38 provides a ligand contact to ATP; the sequence is GLSGGLDS. Position 37 (D37) interacts with Mg(2+). R112 contributes to the deamido-NAD(+) binding site. ATP is bound at residue T132. Residue E137 coordinates Mg(2+). K161 and S183 together coordinate ATP.

The protein belongs to the NAD synthetase family. As to quaternary structure, homodimer.

It carries out the reaction deamido-NAD(+) + NH4(+) + ATP = AMP + diphosphate + NAD(+) + H(+). It functions in the pathway cofactor biosynthesis; NAD(+) biosynthesis; NAD(+) from deamido-NAD(+) (ammonia route): step 1/1. Functionally, catalyzes the ATP-dependent amidation of deamido-NAD to form NAD. Uses ammonia as a nitrogen source. The polypeptide is NH(3)-dependent NAD(+) synthetase (Helicobacter pylori (strain ATCC 700392 / 26695) (Campylobacter pylori)).